The following is a 177-amino-acid chain: Mitochondrial inner membrane protease subunit 2 (177 aa).

The chain crosses the membrane as a helical span at residues 19 to 37 (FFVAVPVAVTFLDRVACVA). Residues Ser43 and Lys91 contribute to the active site.

Belongs to the peptidase S26 family. IMP2 subfamily. As to quaternary structure, heterodimer of 2 subunits, IMMPL1 and IMMPL2.

Its subcellular location is the mitochondrion inner membrane. Catalyzes the removal of transit peptides required for the targeting of proteins from the mitochondrial matrix, across the inner membrane, into the inter-membrane space. Known to process the nuclear encoded protein DIABLO. The sequence is that of Mitochondrial inner membrane protease subunit 2 (IMMP2L) from Bos taurus (Bovine).